Here is a 2563-residue protein sequence, read N- to C-terminus: Highly reducing polyketide synthase 2 (2563 aa).

The region spanning 11–451 is the Ketosynthase family 3 (KS3) domain; the sequence is MSDIAIVGYS…GSNSHIVLDD (441 aa). Catalysis depends on for beta-ketoacyl synthase activity residues cysteine 182, histidine 317, and histidine 357. The 302-residue stretch at 589–890 folds into the Malonyl-CoA:ACP transacylase (MAT) domain; the sequence is FAFTGQGAQY…DTLSEMSSAS (302 aa). The tract at residues 970–1101 is N-terminal hotdog fold; it reads GELLGVRVSD…ANISVEFQDN (132 aa). Residues 970-1269 form the PKS/mFAS DH domain; sequence GELLGVRVSD…TSAVSGGITH (300 aa). Histidine 1002 (proton acceptor; for dehydratase activity) is an active-site residue. Positions 1126 to 1269 are C-terminal hotdog fold; sequence TLPIDPRVFY…TSAVSGGITH (144 aa). Aspartate 1186 serves as the catalytic Proton donor; for dehydratase activity. Residues 1296 to 1618 are methyltransferase (CMet) domain; the sequence is FAANAVPKDD…FSGNDLVIRD (323 aa). The Enoyl reductase (ER) domain occupies 1858–2168; the sequence is GSLDSLQFVE…QEDTSERVIV (311 aa). A Ketoreductase (KR) domain is found at 2192–2370; that stretch reads STYLVAGGSG…ALSLDIGWMS (179 aa). The Carrier domain occupies 2480 to 2561; it reads SDARERQQVV…GVAEVVEARS (82 aa). Residue serine 2521 is modified to O-(pantetheine 4'-phosphoryl)serine.

The cofactor is pantetheine 4'-phosphate.

It participates in secondary metabolite biosynthesis. Its function is as follows. Highly reducing polyketide synthase; part of the gene cluster that mediates the biosynthesis of the tetraketides fugralins such as linear fugralin A and cyclic fugralin B, volatile compounds that play a role in the asexual reproductive cycle but are not involved in pathogenicity. One of the key features of fugralins is the presence of a double methyl group, which is only rarely encountered in fungal secondary metabolites. As the fugralins cluster does not contain an independent methyltransferase, the PKS FGR1 is probably responsible for adding two methyl groups to the same carbon atom. Fugralin B is similar to fugralin A except for a cyclization between the carboxylic acid C-8 and the alcohol on C-4 resulting in a six membered lactone ring, probably catalyzed by the cyclase FGR4. The exact role of the individual cluster genes remains unknown and further work is needed to unravel the biosynthetic pathway. This is Highly reducing polyketide synthase 2 from Gibberella zeae (strain ATCC MYA-4620 / CBS 123657 / FGSC 9075 / NRRL 31084 / PH-1) (Wheat head blight fungus).